The primary structure comprises 300 residues: Epimerase family protein SAR0825 (300 aa).

Belongs to the NAD(P)-dependent epimerase/dehydratase family. SDR39U1 subfamily.

The chain is Epimerase family protein SAR0825 from Staphylococcus aureus (strain MRSA252).